Here is a 166-residue protein sequence, read N- to C-terminus: Deglycase TK1284 (166 aa).

Residues 1-166 (MKVLILSADG…WMREFVKLLR (166 aa)) enclose the PfpI endopeptidase domain. The active site involves His101.

Belongs to the peptidase C56 family. As to quaternary structure, homohexamer formed by a dimer of trimers that assemble into a hollow ring structure.

It is found in the cytoplasm. It catalyses the reaction N(omega)-(1-hydroxy-2-oxopropyl)-L-arginyl-[protein] + H2O = lactate + L-arginyl-[protein] + H(+). It carries out the reaction N(6)-(1-hydroxy-2-oxopropyl)-L-lysyl-[protein] + H2O = lactate + L-lysyl-[protein] + H(+). The enzyme catalyses S-(1-hydroxy-2-oxopropyl)-L-cysteinyl-[protein] + H2O = lactate + L-cysteinyl-[protein] + H(+). The catalysed reaction is N(omega)-(1-hydroxy-2-oxoethyl)-L-arginyl-[protein] + H2O = L-arginyl-[protein] + glycolate + H(+). It catalyses the reaction N(6)-(1-hydroxy-2-oxoethyl)-L-lysyl-[protein] + H2O = glycolate + L-lysyl-[protein] + H(+). It carries out the reaction S-(1-hydroxy-2-oxoethyl)-L-cysteinyl-[protein] + H2O = glycolate + L-cysteinyl-[protein] + H(+). Its function is as follows. Deglycase that catalyzes the deglycation of the Maillard adducts formed between amino groups of proteins and reactive carbonyl groups of glyoxals. Thus, functions as a protein deglycase that repairs methylglyoxal- and glyoxal-glycated proteins, and releases repaired proteins and lactate or glycolate, respectively. Deglycates cysteine, arginine and lysine residues in proteins, and thus reactivates these proteins by reversing glycation by glyoxals. Acts on early glycation intermediates (hemithioacetals and aminocarbinols), preventing the formation of advanced glycation endproducts (AGE) that cause irreversible damage. Also displays proteolytic activity. This is Deglycase TK1284 from Thermococcus kodakarensis (strain ATCC BAA-918 / JCM 12380 / KOD1) (Pyrococcus kodakaraensis (strain KOD1)).